The following is a 258-amino-acid chain: Tryptophan synthase alpha chain (258 aa).

Active-site proton acceptor residues include glutamate 52 and aspartate 63.

This sequence belongs to the TrpA family. Tetramer of two alpha and two beta chains.

The catalysed reaction is (1S,2R)-1-C-(indol-3-yl)glycerol 3-phosphate + L-serine = D-glyceraldehyde 3-phosphate + L-tryptophan + H2O. The protein operates within amino-acid biosynthesis; L-tryptophan biosynthesis; L-tryptophan from chorismate: step 5/5. Its function is as follows. The alpha subunit is responsible for the aldol cleavage of indoleglycerol phosphate to indole and glyceraldehyde 3-phosphate. The polypeptide is Tryptophan synthase alpha chain (Streptococcus pneumoniae (strain 70585)).